The sequence spans 511 residues: Protoheme IX farnesyltransferase, mitochondrial (511 aa).

Residues 1–23 (MSSSTESLPGTLRRTLTTSRAPA) constitute a mitochondrion transit peptide. 2 disordered regions span residues 1–27 (MSSSTESLPGTLRRTLTTSRAPAATSS) and 50–136 (HDSA…LAPD). Low complexity-rich tracts occupy residues 52–79 (SASSQRSTTVASTTSTTADAADGSSSTT), 104–115 (RKAAAAAAAAAA), and 126–136 (PDAPTADLAPD). Helical transmembrane passes span 168 to 188 (LTVLVVLSAMVPYALYPVPSF), 197 to 217 (SLAPSLSPLTLLFLTTGTTLC), 253 to 273 (AAVLFAVGCGLAGTLALYFGV), 275 to 295 (PTVSFLGAANIALYAGAYTPL), 303 to 323 (TWVGAIVGGIPPLMGWAAAAG), 344 to 364 (LGGWLFAGLLFAWQFPHFMPL), 398 to 418 (AFIPLCVGLSATGVTEWSFAV), and 444 to 464 (ARGLFWASVWHLPVIMVLALA).

The protein belongs to the UbiA prenyltransferase family.

The protein resides in the mitochondrion membrane. Converts protoheme IX and farnesyl diphosphate to heme O. This chain is Protoheme IX farnesyltransferase, mitochondrial (pft-1), found in Neurospora crassa (strain ATCC 24698 / 74-OR23-1A / CBS 708.71 / DSM 1257 / FGSC 987).